A 686-amino-acid chain; its full sequence is Translation initiation factor IF-2 (686 aa).

Residues 54 to 105 (KPSVADEFEVEEKVVRSKKNSNKKKKKGKGNEDKRQENFAGRQQTQTVETPD) are disordered. Residues 69 to 81 (RSKKNSNKKKKKG) are compositionally biased toward basic residues. The 170-residue stretch at 188–357 (ERPAVVTIMG…LLISEVEEYK (170 aa)) folds into the tr-type G domain. Positions 197 to 204 (GHVDHGKT) are G1. 197–204 (GHVDHGKT) is a binding site for GTP. The interval 222 to 226 (GITQH) is G2. A G3 region spans residues 243 to 246 (DTPG). GTP-binding positions include 243–247 (DTPGH) and 297–300 (NKMD). A G4 region spans residues 297–300 (NKMD). The G5 stretch occupies residues 333-335 (SAI).

Belongs to the TRAFAC class translation factor GTPase superfamily. Classic translation factor GTPase family. IF-2 subfamily.

Its subcellular location is the cytoplasm. One of the essential components for the initiation of protein synthesis. Protects formylmethionyl-tRNA from spontaneous hydrolysis and promotes its binding to the 30S ribosomal subunits. Also involved in the hydrolysis of GTP during the formation of the 70S ribosomal complex. The chain is Translation initiation factor IF-2 from Bacillus anthracis (strain A0248).